The following is a 233-amino-acid chain: Large ribosomal subunit protein uL1 (233 aa).

This sequence belongs to the universal ribosomal protein uL1 family. In terms of assembly, part of the 50S ribosomal subunit.

Functionally, binds directly to 23S rRNA. The L1 stalk is quite mobile in the ribosome, and is involved in E site tRNA release. Protein L1 is also a translational repressor protein, it controls the translation of the L11 operon by binding to its mRNA. This is Large ribosomal subunit protein uL1 from Novosphingobium aromaticivorans (strain ATCC 700278 / DSM 12444 / CCUG 56034 / CIP 105152 / NBRC 16084 / F199).